The following is a 447-amino-acid chain: Glutamate--tRNA ligase 1 (447 aa).

A 'HIGH' region motif is present at residues 10–20 (PSPTGMLHVGN). Residues 240–244 (KISKR) carry the 'KMSKS' region motif. An ATP-binding site is contributed by K243.

It belongs to the class-I aminoacyl-tRNA synthetase family. Glutamate--tRNA ligase type 1 subfamily. In terms of assembly, monomer.

The protein resides in the cytoplasm. It catalyses the reaction tRNA(Glu) + L-glutamate + ATP = L-glutamyl-tRNA(Glu) + AMP + diphosphate. In terms of biological role, catalyzes the attachment of glutamate to tRNA(Glu) in a two-step reaction: glutamate is first activated by ATP to form Glu-AMP and then transferred to the acceptor end of tRNA(Glu). In Rickettsia rickettsii (strain Sheila Smith), this protein is Glutamate--tRNA ligase 1.